We begin with the raw amino-acid sequence, 146 residues long: Hemoglobin subunit beta (146 aa).

The Globin domain occupies 2–146 (EWTDFERATI…VVNSLGRQYH (145 aa)). Positions 63 and 92 each coordinate heme b.

This sequence belongs to the globin family. As to quaternary structure, heterotetramer of two alpha chains and two beta chains. Can form polymers. Red blood cells.

In terms of biological role, involved in oxygen transport from gills to the various peripheral tissues. The sequence is that of Hemoglobin subunit beta (hbb) from Chelidonichthys kumu (Bluefin gurnard).